Consider the following 943-residue polypeptide: Aconitate hydratase A (943 aa).

The [4Fe-4S] cluster site is built by Cys479, Cys545, and Cys548.

It belongs to the aconitase/IPM isomerase family. In terms of assembly, monomer. [4Fe-4S] cluster serves as cofactor.

The enzyme catalyses citrate = D-threo-isocitrate. It catalyses the reaction (2S,3R)-3-hydroxybutane-1,2,3-tricarboxylate = 2-methyl-cis-aconitate + H2O. The protein operates within carbohydrate metabolism; tricarboxylic acid cycle; isocitrate from oxaloacetate: step 2/2. It participates in organic acid metabolism; propanoate degradation. Its function is as follows. Involved in the catabolism of short chain fatty acids (SCFA) via the tricarboxylic acid (TCA)(acetyl degradation route) and probably via the 2-methylcitrate cycle I (propionate degradation route). Catalyzes the reversible isomerization of citrate to isocitrate via cis-aconitate. The apo form of AcnA functions as a RNA-binding regulatory protein which binds to selected IRE-like sequences present within the UTRs (untranslated regions) of 3' trxC and 5' IdeR mRNA. Could catalyze the hydration of 2-methyl-cis-aconitate to yield (2R,3S)-2-methylisocitrate. The polypeptide is Aconitate hydratase A (acn) (Mycobacterium tuberculosis (strain ATCC 25618 / H37Rv)).